We begin with the raw amino-acid sequence, 386 residues long: Enoyl-[acyl-carrier-protein] reductase 2, mitochondrial (386 aa).

A mitochondrion-targeting transit peptide spans 1 to 22 (MYSVLKQSIRPRLLATHNQFRT). The active-site Proton donor is Y79. Residues N172, 199–202 (TSAV), 222–224 (RDR), 296–299 (YGGM), 321–323 (FWV), and K381 contribute to the NADP(+) site.

It belongs to the zinc-containing alcohol dehydrogenase family. Quinone oxidoreductase subfamily. As to quaternary structure, homodimer and heterodimer with ETR1.

Its subcellular location is the mitochondrion. The enzyme catalyses a 2,3-saturated acyl-[ACP] + NADP(+) = a (2E)-enoyl-[ACP] + NADPH + H(+). Functionally, required for respiration and the maintenance of the mitochondrial compartment. Oxidoreductase with a preference for short and medium chain substrates, including trans-2-hexenoyl-CoA (C6), trans-2-decenoyl-CoA (C10), and trans-2-hexadecenoyl-CoA (C16). May play a role in mitochondrial fatty acid synthesis. The sequence is that of Enoyl-[acyl-carrier-protein] reductase 2, mitochondrial (ETR2) from Candida tropicalis (Yeast).